Reading from the N-terminus, the 1375-residue chain is Ubiquitin carboxyl-terminal hydrolase 47 (1375 aa).

K122 carries the post-translational modification N6-acetyllysine. Residues 188–564 (VGLVNQAMTC…NAYMLIYRLK (377 aa)) enclose the USP domain. The Nucleophile role is filled by C197. A disordered region spans residues 425–452 (DEKSPQTESCTDSGAENEGSCHSDQMSN). Residues 430 to 452 (QTESCTDSGAENEGSCHSDQMSN) are compositionally biased toward polar residues. H503 functions as the Proton acceptor in the catalytic mechanism. S832 carries the phosphoserine modification. 3 disordered regions span residues 840 to 859 (TAYQ…CERV), 880 to 968 (LKSL…SHSS), and 983 to 1024 (NGLD…ESGK). A compositionally biased stretch (low complexity) spans 882–899 (SLSLQQQQDGDNGDSSKS). S910 is subject to Phosphoserine. Residues 912–928 (LNERDSSASVDNRELEQ) are compositionally biased toward basic and acidic residues. Residues 929 to 938 (HIQTSDPENF) show a composition bias toward polar residues. S933 carries the phosphoserine modification. Residues 940-950 (SEERSDSDVNN) show a composition bias toward basic and acidic residues. Residues 953–968 (STSSVDSDILSSSHSS) show a composition bias toward low complexity. Residues 997–1006 (KANEGKKETW) show a composition bias toward basic and acidic residues. A compositionally biased stretch (acidic residues) spans 1007-1020 (DTAEEDSGTDSEYD). S1013 is subject to Phosphoserine. A Phosphothreonine modification is found at T1015. The residue at position 1017 (S1017) is a Phosphoserine.

It belongs to the peptidase C19 family. Interacts with BTRC and FBXW11. Interacts with POLB. As to expression, expressed in skeletal muscle, heart and testis.

It is found in the cytoplasm. The catalysed reaction is Thiol-dependent hydrolysis of ester, thioester, amide, peptide and isopeptide bonds formed by the C-terminal Gly of ubiquitin (a 76-residue protein attached to proteins as an intracellular targeting signal).. Ubiquitin-specific protease that specifically deubiquitinates monoubiquitinated DNA polymerase beta (POLB), stabilizing POLB thereby playing a role in base-excision repair (BER). Acts as a regulator of cell growth and genome integrity. May also indirectly regulate CDC25A expression at a transcriptional level. The protein is Ubiquitin carboxyl-terminal hydrolase 47 (USP47) of Homo sapiens (Human).